The sequence spans 474 residues: tRNA-2-methylthio-N(6)-dimethylallyladenosine synthase (474 aa).

Positions 3–120 constitute an MTTase N-terminal domain; the sequence is KKLHIKTWGC…LPEMINSVRG (118 aa). Positions 12, 49, 83, 157, 161, and 164 each coordinate [4Fe-4S] cluster. A Radical SAM core domain is found at 143 to 375; sequence RAEGPTAFVS…QERINQQAMA (233 aa). Residues 378–441 enclose the TRAM domain; it reads RRMLGSTQRI…PNSLRGKVVR (64 aa).

The protein belongs to the methylthiotransferase family. MiaB subfamily. Monomer. [4Fe-4S] cluster serves as cofactor.

It localises to the cytoplasm. The enzyme catalyses N(6)-dimethylallyladenosine(37) in tRNA + (sulfur carrier)-SH + AH2 + 2 S-adenosyl-L-methionine = 2-methylsulfanyl-N(6)-dimethylallyladenosine(37) in tRNA + (sulfur carrier)-H + 5'-deoxyadenosine + L-methionine + A + S-adenosyl-L-homocysteine + 2 H(+). Its function is as follows. Catalyzes the methylthiolation of N6-(dimethylallyl)adenosine (i(6)A), leading to the formation of 2-methylthio-N6-(dimethylallyl)adenosine (ms(2)i(6)A) at position 37 in tRNAs that read codons beginning with uridine. This is tRNA-2-methylthio-N(6)-dimethylallyladenosine synthase from Salmonella arizonae (strain ATCC BAA-731 / CDC346-86 / RSK2980).